The primary structure comprises 532 residues: Pentatricopeptide repeat-containing protein At4g02820, mitochondrial (532 aa).

The N-terminal 28 residues, 1–28 (MNKNMLVRSARPTLASIHRLFSAAAAAT), are a transit peptide targeting the mitochondrion. The disordered stretch occupies residues 35-56 (PVVKPRSGGGKGGESANKKETV). 10 PPR repeats span residues 161 to 195 (GHAA…GFLK), 196 to 226 (SCLP…LKIR), 230 to 264 (DIVT…KLNP), 265 to 295 (DWVT…MEKL), 300 to 330 (NRVA…VKSS), 335 to 365 (NDAE…WESV), 370 to 404 (DARI…GINP), 405 to 435 (SYST…AIDS), 442 to 472 (NVRL…LQKA), and 476 to 512 (NTQL…DEET).

This sequence belongs to the PPR family. P subfamily.

It localises to the mitochondrion. This is Pentatricopeptide repeat-containing protein At4g02820, mitochondrial from Arabidopsis thaliana (Mouse-ear cress).